The primary structure comprises 837 residues: Ribosome-releasing factor 2, mitochondrial (837 aa).

The transit peptide at methionine 1–leucine 29 directs the protein to the mitochondrion. The 292-residue stretch at leucine 40–leucine 331 folds into the tr-type G domain. GTP is bound by residues alanine 49–threonine 56, aspartate 113–histidine 117, and asparagine 167–aspartate 170. The tract at residues isoleucine 338 to serine 359 is disordered. Over residues valine 345–serine 355 the composition is skewed to basic residues.

This sequence belongs to the TRAFAC class translation factor GTPase superfamily. Classic translation factor GTPase family. EF-G/EF-2 subfamily.

It is found in the mitochondrion. Its function is as follows. Mitochondrial GTPase that mediates the disassembly of ribosomes from messenger RNA at the termination of mitochondrial protein biosynthesis. Not involved in the GTP-dependent ribosomal translocation step during translation elongation. This Meyerozyma guilliermondii (strain ATCC 6260 / CBS 566 / DSM 6381 / JCM 1539 / NBRC 10279 / NRRL Y-324) (Yeast) protein is Ribosome-releasing factor 2, mitochondrial.